The primary structure comprises 277 residues: Ribonuclease HII (277 aa).

Residues 20-250 enclose the RNase H type-2 domain; sequence KLIIGLDEAG…SKKLLKKIED (231 aa). The a divalent metal cation site is built by Asp26, Glu27, and Asp141.

Belongs to the RNase HII family. Mn(2+) serves as cofactor. Requires Mg(2+) as cofactor.

The protein resides in the cytoplasm. The enzyme catalyses Endonucleolytic cleavage to 5'-phosphomonoester.. In terms of biological role, endonuclease that specifically degrades the RNA of RNA-DNA hybrids. This Methanococcus aeolicus (strain ATCC BAA-1280 / DSM 17508 / OCM 812 / Nankai-3) protein is Ribonuclease HII.